The primary structure comprises 231 residues: Glutathione-S-transferase (231 aa).

Residues 15-98 (LFAVKGTATS…YIADAYDKDG (84 aa)) form the GST N-terminal domain.

This sequence belongs to the GST superfamily.

It catalyses the reaction RX + glutathione = an S-substituted glutathione + a halide anion + H(+). Its function is as follows. Conjugation of reduced glutathione to a wide number of exogenous and endogenous hydrophobic electrophiles. This Alternaria alternata (Alternaria rot fungus) protein is Glutathione-S-transferase.